The primary structure comprises 229 residues: Cytochrome c oxidase subunit 2 (229 aa).

Over 1-26 (MATWAQLNFQDAASPMMEQLHYFHDH) the chain is Mitochondrial intermembrane. A helical membrane pass occupies residues 27–48 (TMMVLVIITIMVAYIMGTMFFN). The Mitochondrial matrix segment spans residues 49–62 (KDVNRYLLDGQKIE). A helical transmembrane segment spans residues 63–82 (TEWTIVPVFVLVIIAMPSLR). The Mitochondrial intermembrane segment spans residues 83–229 (LLYLLDEVNE…INWIQNMSEA (147 aa)). Cu cation-binding residues include His-161, Cys-196, Glu-198, Cys-200, His-204, and Met-207. Glu-198 is a binding site for Mg(2+).

This sequence belongs to the cytochrome c oxidase subunit 2 family. Component of the cytochrome c oxidase (complex IV, CIV), a multisubunit enzyme composed of a catalytic core of 3 subunits and several supernumerary subunits. The complex exists as a monomer or a dimer and forms supercomplexes (SCs) in the inner mitochondrial membrane with ubiquinol-cytochrome c oxidoreductase (cytochrome b-c1 complex, complex III, CIII). Cu cation serves as cofactor.

Its subcellular location is the mitochondrion inner membrane. It catalyses the reaction 4 Fe(II)-[cytochrome c] + O2 + 8 H(+)(in) = 4 Fe(III)-[cytochrome c] + 2 H2O + 4 H(+)(out). Component of the cytochrome c oxidase, the last enzyme in the mitochondrial electron transport chain which drives oxidative phosphorylation. The respiratory chain contains 3 multisubunit complexes succinate dehydrogenase (complex II, CII), ubiquinol-cytochrome c oxidoreductase (cytochrome b-c1 complex, complex III, CIII) and cytochrome c oxidase (complex IV, CIV), that cooperate to transfer electrons derived from NADH and succinate to molecular oxygen, creating an electrochemical gradient over the inner membrane that drives transmembrane transport and the ATP synthase. Cytochrome c oxidase is the component of the respiratory chain that catalyzes the reduction of oxygen to water. Electrons originating from reduced cytochrome c in the intermembrane space (IMS) are transferred via the dinuclear copper A center (CU(A)) of subunit 2 and heme A of subunit 1 to the active site in subunit 1, a binuclear center (BNC) formed by heme A3 and copper B (CU(B)). The BNC reduces molecular oxygen to 2 water molecules using 4 electrons from cytochrome c in the IMS and 4 protons from the mitochondrial matrix. The chain is Cytochrome c oxidase subunit 2 (COII) from Sympetrum striolatum (Common darter dragonfly).